The following is a 178-amino-acid chain: Stathmin-2-A (178 aa).

The 141-residue stretch at 38 to 178 folds into the SLD domain; it reads DDMEIKQLNK…RNKEQLELSG (141 aa). A coiled-coil region spans residues 75–178; sequence KKKDVSLGEI…RNKEQLELSG (104 aa).

This sequence belongs to the stathmin family. Nervous tissue.

The protein resides in the cytoplasm. It is found in the membrane. It localises to the cell projection. The protein localises to the lamellipodium. This chain is Stathmin-2-A (stmn2-a), found in Xenopus laevis (African clawed frog).